We begin with the raw amino-acid sequence, 92 residues long: Cell division protein FtsB (92 aa).

Residues Met-1–Leu-3 lie on the Cytoplasmic side of the membrane. A helical transmembrane segment spans residues Phe-4–Phe-21. At Gly-22 to Lys-92 the chain is on the periplasmic side. The stretch at Tyr-26–Gln-74 forms a coiled coil.

It belongs to the FtsB family. In terms of assembly, part of a complex composed of FtsB, FtsL and FtsQ.

It is found in the cell inner membrane. Functionally, essential cell division protein. May link together the upstream cell division proteins, which are predominantly cytoplasmic, with the downstream cell division proteins, which are predominantly periplasmic. This Pasteurella multocida (strain Pm70) protein is Cell division protein FtsB.